The primary structure comprises 172 residues: Secretory-abundant heat soluble protein 64681 (172 aa).

The first 19 residues, 1–19 (MSRTIVALILLGLAALAAA), serve as a signal peptide directing secretion. The segment at 30 to 59 (EWAGKAWLGKWVSTDRSENWDAFVEALGLP) is SAHS-c1. The SAHS-c2 stretch occupies residues 74–102 (WKEGDHYHHQIIIADKSYKQDIQFKLGEE). Residues Asn-108 and Asn-133 are each glycosylated (N-linked (GlcNAc...) asparagine). The tract at residues 115–164 (KYTEVGDNLQNEVKIPSKNKTISDSYVVKGDELEKTYKINDVVAKRWYKK) is SAHS-c3.

It belongs to the Secretory-abundant heat soluble protein (SAHS) family.

The protein resides in the secreted. Its function is as follows. Secreted heat soluble protein acting as a molecular shield in water-deficient condition. Tardigrade-specific intrinsically disordered proteins (TDPs) are essential for desiccation tolerance by forming non-crystalline amorphous solids upon desiccation, and this vitrified state mirrors their protective capabilities. The chain is Secretory-abundant heat soluble protein 64681 from Hypsibius exemplaris (Freshwater tardigrade).